The following is a 298-amino-acid chain: Ribosomal protein L11 methyltransferase (298 aa).

Residues threonine 148, glycine 169, aspartate 191, and asparagine 233 each coordinate S-adenosyl-L-methionine.

This sequence belongs to the methyltransferase superfamily. PrmA family.

It localises to the cytoplasm. It catalyses the reaction L-lysyl-[protein] + 3 S-adenosyl-L-methionine = N(6),N(6),N(6)-trimethyl-L-lysyl-[protein] + 3 S-adenosyl-L-homocysteine + 3 H(+). Methylates ribosomal protein L11. In Marinobacter nauticus (strain ATCC 700491 / DSM 11845 / VT8) (Marinobacter aquaeolei), this protein is Ribosomal protein L11 methyltransferase.